The primary structure comprises 124 residues: Large-conductance mechanosensitive channel (124 aa).

2 consecutive transmembrane segments (helical) span residues 15–35 (MDLA…NSLV) and 67–87 (GSFL…FFLI).

Belongs to the MscL family. In terms of assembly, homopentamer.

The protein resides in the cell membrane. Its function is as follows. Channel that opens in response to stretch forces in the membrane lipid bilayer. May participate in the regulation of osmotic pressure changes within the cell. In Lactobacillus johnsonii (strain CNCM I-12250 / La1 / NCC 533), this protein is Large-conductance mechanosensitive channel.